Here is a 379-residue protein sequence, read N- to C-terminus: Guanine nucleotide-binding protein subunit alpha-12 (379 aa).

Cysteine 11 carries S-palmitoyl cysteine lipidation. In terms of domain architecture, G-alpha spans 54 to 379; it reads RLVKILLLGA…QENLKDIMLQ (326 aa). Positions 57–70 are G1 motif; sequence KILLLGAGESGKST. GTP contacts are provided by residues 65 to 70 and 200 to 203; these read ESGKST and LLAR. Serine 69 contacts Mg(2+). The tract at residues 198-206 is G2 motif; sequence DILLARKAT. Threonine 206 lines the Mg(2+) pocket. The residue at position 206 (threonine 206) is a Phosphothreonine. The segment at 221-230 is G3 motif; the sequence is FKMVDVGGQR. Positions 290–297 are G4 motif; the sequence is ILFLNKMD. GTP-binding positions include 294–297 and alanine 351; that span reads NKMD. Residues 349-354 form a G5 motif region; sequence TTAIDT.

It belongs to the G-alpha family. G(12) subfamily. As to quaternary structure, g proteins are composed of 3 units; alpha, beta and gamma. The alpha chain contains the guanine nucleotide binding site. Interacts with UBXD5. Interacts (in GTP-bound form) with PPP5C (via TPR repeats); activates PPP5C phosphatase activity and translocates PPP5C to the cell membrane. Interacts with RGS22. Interacts (via N-terminus) with NAPA; the interaction promotes CDH5 localization to plasma membrane. Interacts with CTNND1 (via N-terminus); the interaction regulates CDH1-mediated cell-cell adhesion. Interacts with PPP2R1A; the interaction promotes protein phosphatase 2A activation causing dephosphorylation of MAPT. Interacts (in GTP-bound form) with ARHGEF1. Interacts (in GTP-bound form) with ARHGEF11 (via RGS domain). Interacts (in GTP-bound form) with ARHGEF12 (via RGS domain).

The protein localises to the cell membrane. The protein resides in the lateral cell membrane. It is found in the cytoplasm. In terms of biological role, guanine nucleotide-binding proteins (G proteins) are involved as modulators or transducers in various transmembrane signaling systems. Activates effector molecule RhoA by binding and activating RhoGEFs (ARHGEF12/LARG). GNA12-dependent Rho signaling subsequently regulates transcription factor AP-1 (activating protein-1). GNA12-dependent Rho signaling also regulates protein phosphatese 2A activation causing dephosphorylation of its target proteins. Promotes tumor cell invasion and metastasis by activating RhoA/ROCK signaling pathway and up-regulating pro-inflammatory cytokine production. Inhibits CDH1-mediated cell adhesion in process independent from Rho activation. Together with NAPA promotes CDH5 localization to plasma membrane. May play a role in the control of cell migration through the TOR signaling cascade. This chain is Guanine nucleotide-binding protein subunit alpha-12 (Gna12), found in Rattus norvegicus (Rat).